A 142-amino-acid chain; its full sequence is Organic hydroperoxide resistance protein-like 2 (142 aa).

Belongs to the OsmC/Ohr family.

The sequence is that of Organic hydroperoxide resistance protein-like 2 from Staphylococcus epidermidis (strain ATCC 35984 / DSM 28319 / BCRC 17069 / CCUG 31568 / BM 3577 / RP62A).